A 1774-amino-acid chain; its full sequence is Collagen alpha-1(XVIII) chain (1774 aa).

Positions 1-26 are cleaved as a signal peptide; that stretch reads MAPDPSRRLCLLLLLLLSCRLVPASA. Residues 27–785 are nonhelical region 1 (NC1); sequence DGNSLSPLNP…QNPGRGLIKG (759 aa). Disordered stretches follow at residues 47–113 and 218–269; these read DSLE…TPAV and LPPF…LEGK. Composition is skewed to polar residues over residues 55 to 87 and 244 to 256; these read KPQN…TPAS and LSSS…SWGN. N-linked (GlcNAc...) asparagine glycosylation is found at asparagine 354 and asparagine 361. In terms of domain architecture, FZ spans 365-482; that stretch reads TSTSRCLPLP…SQEDGYCVFI (118 aa). 5 disulfides stabilise this stretch: cysteine 370/cysteine 433, cysteine 380/cysteine 426, cysteine 417/cysteine 455, cysteine 444/cysteine 479, and cysteine 448/cysteine 468. In terms of domain architecture, Laminin G-like spans 522–704; it reads GPDSNSGQVA…EDRASGDFGS (183 aa). An N-linked (GlcNAc...) asparagine glycan is attached at asparagine 585. The tract at residues 681-1458 is disordered; sequence RVSPVHCLDE…PPGPPGAMGA (778 aa). The segment covering 708-717 has biased composition (basic and acidic residues); the sequence is ESSKSHKEDT. Threonine 730 carries the post-translational modification Phosphothreonine. A triple-helical region 1 (COL1) region spans residues 786 to 812; that stretch reads GMKGQKGEPGAQGPPGPAGPQGPAGPV. The segment covering 809 to 824 has biased composition (low complexity); sequence AGPVVQSPNSQPVPGA. The segment at 813–822 is nonhelical region 2 (NC2); the sequence is VQSPNSQPVP. One can recognise a Collagen-like 1 domain in the interval 823–878; it reads GAQGPPGPQGPPGKDGTPGRDGEPGDPGEDGRPGDTGPQGFPGTPGDVGPKGEKGD. The tract at residues 823–896 is triple-helical region 2 (COL2); sequence GAQGPPGPQG…PGPPGPPGPS (74 aa). A compositionally biased stretch (basic and acidic residues) spans 839–855; it reads TPGRDGEPGDPGEDGRP. A compositionally biased stretch (pro residues) spans 884 to 895; the sequence is RGPPGPPGPPGP. The tract at residues 897–920 is nonhelical region 3 (NC3); the sequence is FRQDKLTFIDMEGSGFSGDIESLR. A glycan (O-linked (Xyl...) (chondroitin sulfate) serine) is linked at serine 910. The segment at 921–1042 is triple-helical region 3 (COL3); it reads GPRGFPGPPG…PGPPGPPGPG (122 aa). Residues 925-935 are compositionally biased toward pro residues; the sequence is FPGPPGPPGVP. A glycan (N-linked (GlcNAc...) asparagine) is linked at asparagine 947. Residues 951 to 963 are compositionally biased toward low complexity; sequence APGPAGLPGVPGK. Collagen-like domains follow at residues 953–1007 and 1008–1041; these read GPAG…GSKG and DLGP…PPGP. 2 stretches are compositionally biased toward pro residues: residues 967–982 and 1026–1041; these read PGFP…PGKE and PVGP…PPGP. Residues 1043-1065 form a nonhelical region 4 (NC4) region; sequence FAAGFDDMEGSGIPLWTTARSSD. Collagen-like domains lie at 1066–1117, 1118–1147, 1162–1202, and 1216–1264; these read GLQG…GPKG, EKGM…PPGP, PGPE…GEPG, and QKGA…EPGD. Positions 1066–1148 are triple-helical region 4 (COL4); sequence GLQGPPGSPG…PGPPGPPGPV (83 aa). A compositionally biased stretch (pro residues) spans 1138-1147; the sequence is LPGPPGPPGP. Residues 1149-1162 are nonhelical region 5 (NC5); it reads IYVSSEDKAIVSTP. A triple-helical region 5 (COL5) region spans residues 1163–1204; sequence GPEGKPGYAGFPGPAGPKGDLGSKGEQGLPGPKGEKGEPGTI. Residues 1205–1217 are nonhelical region 6 (NC6); sequence FSPDGRALGHPQK. The tract at residues 1218-1290 is triple-helical region 6 (COL6); that stretch reads GAKGEPGFRG…PGPPGPPGMP (73 aa). The segment covering 1275-1289 has biased composition (pro residues); the sequence is PGPPGPPGPPGPPGM. The nonhelical region 7 (NC7) stretch occupies residues 1291–1300; sequence IYDSNAFVES. A compositionally biased stretch (low complexity) spans 1301 to 1317; that stretch reads GRPGLPGQQGVQGPSGP. The interval 1301–1333 is triple-helical region 7 (COL7); that stretch reads GRPGLPGQQGVQGPSGPKGDKGEVGPPGPPGQF. The tract at residues 1334–1345 is nonhelical region 8 (NC8); it reads PIDLFHLEAEMK. Over residues 1338-1362 the composition is skewed to basic and acidic residues; sequence FHLEAEMKGDKGDRGDAGQKGERGE. The segment at 1346–1369 is triple-helical region 8 (COL8); it reads GDKGDRGDAGQKGERGEPGAPGGG. Residues 1351-1353 carry the Cell attachment site motif; the sequence is RGD. The nonhelical region 9 (NC9) stretch occupies residues 1370-1376; it reads FFSSSVP. Pro residues-rich tracts occupy residues 1376–1388, 1398–1407, 1418–1431, and 1441–1453; these read PGPP…PGIP, PPGPPGPQGP, PPGP…PSFP, and PGPP…PGPP. The tract at residues 1377-1428 is triple-helical region 9 (COL9); the sequence is GPPGPPGYPGIPGPKGESIRGPPGPPGPQGPPGIGYEGRQGPPGPPGPPGPP. The segment at 1429 to 1441 is nonhelical region 10 (NC10); that stretch reads SFPGPHRQTVSVP. Residues 1442-1459 form a triple-helical region 10 (COL10) region; sequence GPPGPPGPPGPPGAMGAS. The segment at 1460–1774 is nonhelical region 11 (NC11); sequence AGQVRIWATY…ENSFMTSFSK (315 aa). Positions 1474–1519 are non-collagenous domain 1 association domain; it reads DKIREVPEGWLIFVAEREELYVRVRNGFRKVLLEARTALPRGTGNE. The non-collagenous domain 1 hinge region stretch occupies residues 1520–1590; that stretch reads VAALQPPLVQ…PPARPTLSLA (71 aa). Zn(2+) is bound by residues histidine 1591, histidine 1593, aspartate 1595, histidine 1601, and aspartate 1666. Intrachain disulfides connect cysteine 1623–cysteine 1763 and cysteine 1725–cysteine 1755.

This sequence belongs to the multiplexin collagen family. In terms of assembly, forms homotrimers. Recombinant non-collagenous domain 1 has stronger affinity to NID1, HSPG2 and laminin-1:NID1 complex and lower affinity to FBLN1 and FBLN2 than endostatin. As to quaternary structure, monomeric. Interacts with KDR/VEGFR2. Interacts with the ITGA5:ITGB1 complex. Interacts with NID1, HSPG2, laminin-1:NID1 complex, FBLN1 and FBLN2. Prolines at the third position of the tripeptide repeating unit (G-X-Y) of the triple-helical regions are hydroxylated. In terms of processing, undergoes proteolytic processing by CTSL/cathepsin-L and elastase-like proteases to generate both non-collagenous domain 1 trimers and endostatin monomers. In tissue extracts (brain, skeletal muscle, heart, kidney, testis and liver) predominantly bands of approximately 38 kDa are detected; recombinant non-collagenous domain 1 shows similar mobility. In vitro, several proteolytic cleavage sites in the non-collagenous domain 1 hinge region generating different endostatin-like peptides are reported. In terms of tissue distribution, expressed in liver, kidney, lung, skeletal muscle and testis.

Its subcellular location is the secreted. It localises to the extracellular space. The protein localises to the extracellular matrix. The protein resides in the basement membrane. Functionally, probably plays a major role in determining the retinal structure as well as in the closure of the neural tube. May regulate extracellular matrix-dependent motility and morphogenesis of endothelial and non-endothelial cells; the function requires homotrimerization and implicates MAPK signaling. Its function is as follows. Potently inhibits endothelial cell proliferation and angiogenesis. May inhibit angiogenesis by binding to the heparan sulfate proteoglycans involved in growth factor signaling. Inhibits VEGFA isoform VEGF165-induced endothelial cell proliferation and migration. Seems to inhibit VEGFA-mediated signaling by blocking the interaction of VEGFA to its receptor KDR/VEGFR2. Modulates endothelial cell migration in an integrin-dependent manner implicating integrin ITGA5:ITGB1 and to a lesser extent ITGAV:ITGB3 and ITGAV:ITGB5. May negatively regulate the activity of homotrimeric non-collagenous domain 1. The polypeptide is Collagen alpha-1(XVIII) chain (Mus musculus (Mouse)).